The primary structure comprises 354 residues: Probable alcohol acetyltransferase (354 aa).

Residues Ser-124 and His-293 each act as charge relay system in the active site.

The protein belongs to the AB hydrolase superfamily.

Probable alcohol acetyltransferase that uses acetyl-CoA to synthesize acetate esters from various alcohols. Not involved in the synthesis of ethyl acetate. This Cyberlindnera jadinii (strain ATCC 18201 / CBS 1600 / BCRC 20928 / JCM 3617 / NBRC 0987 / NRRL Y-1542) (Torula yeast) protein is Probable alcohol acetyltransferase (EAT2).